The sequence spans 552 residues: MHCERFLCILRIIGTTLFGVSLLLGITAAYIVGYQFIQTDNYYFSFGLYGAFLASHLIIQSLFAFLEHRKMKKSLETPIKLNKTVALCIAAYQEDPDYLRKCLQSVKRLTYPGIKVVMVIDGNSDDDLYMMDIFSEVMGRDKSATYIWKNNFHEKGPGETDESHKESSQHVTQLVLSSKSVCIMQKWGGKREVMYTAFRALGRSVDYVQVCDSDTMLDPASSVEMVKVLEEDPMVGGVGGDVQILNKYDSWISFLSSVRYWMAFNIERACQSYFGCVQCISGPLGMYRNSLLHEFVEDWYSQEFMGNQCSFGDDRHLTNRVLSLGYATKYTARSKCLTETPIEYLRWLNQQTRWSKSYFREWLYNAMWFHKHHLWMTYEAVITGFFPFFLIATVIQLFYRGKIWNILLFLLTVQLVGLIKSSFASCLRGNIVMVFMSLYSVLYMSSLLPAKMFAIATINKAGWGTSGRKTIVVNFIGLIPVSVWFTILLGGVIFTIYKESKKPFSESKQTVLIVGTLLYACYWVMLLTLYVVLINKCGRRKKGQQYDMVLDV.

Over 1–11 (MHCERFLCILR) the chain is Cytoplasmic. A helical transmembrane segment spans residues 12-32 (IIGTTLFGVSLLLGITAAYIV). Over 33 to 45 (GYQFIQTDNYYFS) the chain is Extracellular. A helical transmembrane segment spans residues 46 to 66 (FGLYGAFLASHLIIQSLFAFL). Over 67-374 (EHRKMKKSLE…NAMWFHKHHL (308 aa)) the chain is Cytoplasmic. Thr110 bears the Phosphothreonine mark. Residue Lys190 forms a Glycyl lysine isopeptide (Lys-Gly) (interchain with G-Cter in ubiquitin) linkage. O-linked (GlcNAc) serine glycosylation is present at Ser221. Residue Thr328 is modified to Phosphothreonine. A helical membrane pass occupies residues 375-395 (WMTYEAVITGFFPFFLIATVI). Residues 396-402 (QLFYRGK) are Extracellular-facing. The chain crosses the membrane as a helical span at residues 403-423 (IWNILLFLLTVQLVGLIKSSF). Over 424 to 429 (ASCLRG) the chain is Cytoplasmic. Residues 430 to 450 (NIVMVFMSLYSVLYMSSLLPA) form a helical membrane-spanning segment. The Extracellular portion of the chain corresponds to 451 to 475 (KMFAIATINKAGWGTSGRKTIVVNF). The helical transmembrane segment at 476–496 (IGLIPVSVWFTILLGGVIFTI) threads the bilayer. The Cytoplasmic portion of the chain corresponds to 497–510 (YKESKKPFSESKQT). Residues 511–531 (VLIVGTLLYACYWVMLLTLYV) form a helical membrane-spanning segment. The Extracellular segment spans residues 532–552 (VLINKCGRRKKGQQYDMVLDV).

This sequence belongs to the NodC/HAS family. Homodimer; dimerization promotes enzymatic activity. Forms heterodimer with HAS3. Forms heterodimer with HAS1. Mg(2+) serves as cofactor. Phosphorylation at Thr-328 is essential for hyaluronan synthase activity. In terms of processing, O-GlcNAcylation at Ser-221 increases the stability of HAS2 and plasma membrane localization. Post-translationally, ubiquitination at Lys-190; this ubiquitination is essential for hyaluronan synthase activity and homo- or hetero-oligomerization. Can also be poly-ubiquitinated. Deubiquitinated by USP17L22/USP17 and USP4. USP17L22/USP17 efficiently removes 'Lys-63'- and 'Lys-48'-linked polyubiquitin chains, whereas USP4 preferentially removes monoubiquitination and, partially, both 'Lys-63'- and 'Lys-48'-linked polyubiquitin chain. As to expression, overexpressed in skin fibroblasts.

It localises to the cell membrane. The protein localises to the endoplasmic reticulum membrane. Its subcellular location is the vesicle. It is found in the golgi apparatus membrane. The protein resides in the lysosome. It carries out the reaction [hyaluronan](n) + UDP-N-acetyl-alpha-D-glucosamine = N-acetyl-beta-D-glucosaminyl-(1-&gt;4)-[hyaluronan](n) + UDP + H(+). It catalyses the reaction N-acetyl-beta-D-glucosaminyl-(1-&gt;4)-[hyaluronan](n) + UDP-alpha-D-glucuronate = [hyaluronan](n+1) + UDP + H(+). It functions in the pathway glycan biosynthesis; hyaluronan biosynthesis. Functionally, catalyzes the addition of GlcNAc or GlcUA monosaccharides to the nascent hyaluronan polymer. Therefore, it is essential to hyaluronan synthesis a major component of most extracellular matrices that has a structural role in tissues architectures and regulates cell adhesion, migration and differentiation. This is one of three isoenzymes responsible for cellular hyaluronan synthesis and it is particularly responsible for the synthesis of high molecular mass hyaluronan. This is Hyaluronan synthase 2 (Has2) from Heterocephalus glaber (Naked mole rat).